The chain runs to 448 residues: MSFTPGKQSSSRASSGNRSGNGILKWADQSDQSRNVQTRGRRAQPKQTATSQQPSGGNVVPYYSWFSGITQFQKGKEFEFAEGQGVPIAPGVPATEAKGYWYRHNRRSFKTADGNQRQLLPRWYFYYLGTGPHAKDQYGTDIDGVFWVASNQADVNTPADILDRDPSSDEAIPTRFPPGTVLPQGYYIEGSGRSAPNSRSTSRASSRASSAGSRSRANSGNRTPTSGVTPDMADQIASLVLAKLGKDATKPQQVTKQTAKEIRQKILNKPRQKRSPNKQCTVQQCFGKRGPNQNFGGGEMLKLGTSDPQFPILAELAPTAGAFFFGSRLELAKVQNLSGNLDEPQKDVYELRYNGAIRFDSTLSGFETIMKVLNENLNAYQQQDGMMNMSPKPQRQRGQKNGQGENDNISVAAPKSRVQQNKSRELTAEDISLLKKMDEPYTEDTSEI.

The disordered stretch occupies residues 1-55 (MSFTPGKQSSSRASSGNRSGNGILKWADQSDQSRNVQTRGRRAQPKQTATSQQPS). Residues 9-22 (SSSRASSGNRSGNG) show a composition bias toward low complexity. Polar residues-rich tracts occupy residues 29–38 (QSDQSRNVQT) and 45–55 (PKQTATSQQPS). The segment at 52–194 (QQPSGGNVVP…GYYIEGSGRS (143 aa)) is RNA-binding. Residues 61 to 190 (PYYSWFSGIT…VLPQGYYIEG (130 aa)) enclose the CoV N NTD domain. 3 residues coordinate RNA: R106, R122, and R164. Disordered stretches follow at residues 157 to 231 (TPAD…VTPD), 266 to 297 (ILNK…NFGG), and 385 to 448 (GMMN…TSEI). S167 carries the phosphoserine; by host modification. At T174 the chain carries Phosphothreonine; by host. At S191 the chain carries Phosphoserine; by host. The span at 193–223 (RSAPNSRSTSRASSRASSAGSRSRANSGNRT) shows a compositional bias: low complexity. Residues 259-384 (AKEIRQKILN…ENLNAYQQQD (126 aa)) enclose the CoV N CTD domain. The span at 266 to 276 (ILNKPRQKRSP) shows a compositional bias: basic residues. The tract at residues 266–384 (ILNKPRQKRS…ENLNAYQQQD (119 aa)) is dimerization. Residue S390 is modified to Phosphoserine; by host. The segment covering 399–409 (QKNGQGENDNI) has biased composition (polar residues). The span at 422-439 (KSRELTAEDISLLKKMDE) shows a compositional bias: basic and acidic residues. Residue S423 is modified to Phosphoserine; by host. Residue T427 is modified to Phosphothreonine; by host.

It belongs to the betacoronavirus nucleocapsid protein family. As to quaternary structure, homooligomer. Both monomeric and oligomeric forms interact with RNA. Interacts with protein M. Interacts with NSP3; this interaction serves to tether the genome to the newly translated replicase-transcriptase complex at a very early stage of infection. In terms of processing, ADP-ribosylated. The ADP-ribosylation is retained in the virion during infection. Post-translationally, phosphorylated on serine and threonine residues.

Its subcellular location is the virion. It is found in the host endoplasmic reticulum-Golgi intermediate compartment. It localises to the host Golgi apparatus. In terms of biological role, packages the positive strand viral genome RNA into a helical ribonucleocapsid (RNP) and plays a fundamental role during virion assembly through its interactions with the viral genome and membrane protein M. Plays an important role in enhancing the efficiency of subgenomic viral RNA transcription as well as viral replication. In Bovine coronavirus (strain OK-0514) (BCoV), this protein is Nucleoprotein.